The sequence spans 264 residues: Methionine aminopeptidase (264 aa).

His79 contacts substrate. Residues Asp97, Asp108, and His171 each coordinate a divalent metal cation. Position 178 (His178) interacts with substrate. The a divalent metal cation site is built by Glu204 and Glu235.

The protein belongs to the peptidase M24A family. Methionine aminopeptidase type 1 subfamily. In terms of assembly, monomer. Co(2+) is required as a cofactor. It depends on Zn(2+) as a cofactor. Requires Mn(2+) as cofactor. Fe(2+) serves as cofactor.

It catalyses the reaction Release of N-terminal amino acids, preferentially methionine, from peptides and arylamides.. Its function is as follows. Removes the N-terminal methionine from nascent proteins. The N-terminal methionine is often cleaved when the second residue in the primary sequence is small and uncharged (Met-Ala-, Cys, Gly, Pro, Ser, Thr, or Val). Requires deformylation of the N(alpha)-formylated initiator methionine before it can be hydrolyzed. In Escherichia coli O157:H7, this protein is Methionine aminopeptidase.